A 131-amino-acid chain; its full sequence is Small ribosomal subunit protein uS8 (131 aa).

The protein belongs to the universal ribosomal protein uS8 family. As to quaternary structure, part of the 30S ribosomal subunit. Contacts proteins S5 and S12.

One of the primary rRNA binding proteins, it binds directly to 16S rRNA central domain where it helps coordinate assembly of the platform of the 30S subunit. The protein is Small ribosomal subunit protein uS8 of Leptothrix cholodnii (strain ATCC 51168 / LMG 8142 / SP-6) (Leptothrix discophora (strain SP-6)).